Here is a 131-residue protein sequence, read N- to C-terminus: Sec-independent protein translocase protein TatB (131 aa).

Residues 2 to 22 (FANIGWGEMLVLVMVGLVVLG) form a helical membrane-spanning segment. The disordered stretch occupies residues 90–131 (DSLFTGDFDRPTPKKPDAAGSAGPDATEQIGAGPIPFDSDAT). The span at 96 to 106 (DFDRPTPKKPD) shows a compositional bias: basic and acidic residues.

This sequence belongs to the TatB family. The Tat system comprises two distinct complexes: a TatABC complex, containing multiple copies of TatA, TatB and TatC subunits, and a separate TatA complex, containing only TatA subunits. Substrates initially bind to the TatABC complex, which probably triggers association of the separate TatA complex to form the active translocon.

It localises to the cell membrane. Part of the twin-arginine translocation (Tat) system that transports large folded proteins containing a characteristic twin-arginine motif in their signal peptide across membranes. Together with TatC, TatB is part of a receptor directly interacting with Tat signal peptides. TatB may form an oligomeric binding site that transiently accommodates folded Tat precursor proteins before their translocation. The sequence is that of Sec-independent protein translocase protein TatB from Mycobacterium bovis (strain ATCC BAA-935 / AF2122/97).